The sequence spans 642 residues: Threonine--tRNA ligase (642 aa).

The region spanning methionine 1–threonine 61 is the TGS domain. A catalytic region spans residues aspartate 243–proline 534. Cysteine 334, histidine 385, and histidine 511 together coordinate Zn(2+).

The protein belongs to the class-II aminoacyl-tRNA synthetase family. In terms of assembly, homodimer. Zn(2+) is required as a cofactor.

The protein localises to the cytoplasm. It carries out the reaction tRNA(Thr) + L-threonine + ATP = L-threonyl-tRNA(Thr) + AMP + diphosphate + H(+). Catalyzes the attachment of threonine to tRNA(Thr) in a two-step reaction: L-threonine is first activated by ATP to form Thr-AMP and then transferred to the acceptor end of tRNA(Thr). Also edits incorrectly charged L-seryl-tRNA(Thr). The polypeptide is Threonine--tRNA ligase (Yersinia enterocolitica serotype O:8 / biotype 1B (strain NCTC 13174 / 8081)).